Reading from the N-terminus, the 189-residue chain is Elongation factor P (189 aa).

The protein belongs to the elongation factor P family.

The protein localises to the cytoplasm. The protein operates within protein biosynthesis; polypeptide chain elongation. Functionally, involved in peptide bond synthesis. Stimulates efficient translation and peptide-bond synthesis on native or reconstituted 70S ribosomes in vitro. Probably functions indirectly by altering the affinity of the ribosome for aminoacyl-tRNA, thus increasing their reactivity as acceptors for peptidyl transferase. The polypeptide is Elongation factor P (Pseudomonas syringae pv. tomato (strain ATCC BAA-871 / DC3000)).